Here is a 753-residue protein sequence, read N- to C-terminus: 5-methyltetrahydropteroyltriglutamate--homocysteine methyltransferase (753 aa).

5-methyltetrahydropteroyltri-L-glutamate-binding positions include 17–20 (RELK) and lysine 117. L-homocysteine is bound by residues 431–433 (IGS) and glutamate 484. Residues 431-433 (IGS) and glutamate 484 contribute to the L-methionine site. 5-methyltetrahydropteroyltri-L-glutamate-binding positions include 515 to 516 (RC) and tryptophan 561. Aspartate 599 contributes to the L-homocysteine binding site. Aspartate 599 provides a ligand contact to L-methionine. Glutamate 605 contacts 5-methyltetrahydropteroyltri-L-glutamate. 3 residues coordinate Zn(2+): histidine 641, cysteine 643, and glutamate 665. The active-site Proton donor is histidine 694. Cysteine 726 is a Zn(2+) binding site.

Belongs to the vitamin-B12 independent methionine synthase family. The cofactor is Zn(2+).

It catalyses the reaction 5-methyltetrahydropteroyltri-L-glutamate + L-homocysteine = tetrahydropteroyltri-L-glutamate + L-methionine. It participates in amino-acid biosynthesis; L-methionine biosynthesis via de novo pathway; L-methionine from L-homocysteine (MetE route): step 1/1. Catalyzes the transfer of a methyl group from 5-methyltetrahydrofolate to homocysteine resulting in methionine formation. The sequence is that of 5-methyltetrahydropteroyltriglutamate--homocysteine methyltransferase from Citrobacter koseri (strain ATCC BAA-895 / CDC 4225-83 / SGSC4696).